A 131-amino-acid chain; its full sequence is Small ribosomal subunit protein uS8 (131 aa).

This sequence belongs to the universal ribosomal protein uS8 family. In terms of assembly, part of the 30S ribosomal subunit. Contacts proteins S5 and S12.

In terms of biological role, one of the primary rRNA binding proteins, it binds directly to 16S rRNA central domain where it helps coordinate assembly of the platform of the 30S subunit. In Campylobacter jejuni subsp. doylei (strain ATCC BAA-1458 / RM4099 / 269.97), this protein is Small ribosomal subunit protein uS8.